We begin with the raw amino-acid sequence, 430 residues long: UDP-N-acetylglucosamine 1-carboxyvinyltransferase 1 (430 aa).

22–23 (KN) provides a ligand contact to phosphoenolpyruvate. Arginine 93 is a binding site for UDP-N-acetyl-alpha-D-glucosamine. The Proton donor role is filled by cysteine 117. Cysteine 117 is subject to 2-(S-cysteinyl)pyruvic acid O-phosphothioketal. UDP-N-acetyl-alpha-D-glucosamine-binding positions include 122 to 126 (RPVDL), aspartate 305, and valine 327.

This sequence belongs to the EPSP synthase family. MurA subfamily.

Its subcellular location is the cytoplasm. The catalysed reaction is phosphoenolpyruvate + UDP-N-acetyl-alpha-D-glucosamine = UDP-N-acetyl-3-O-(1-carboxyvinyl)-alpha-D-glucosamine + phosphate. It functions in the pathway cell wall biogenesis; peptidoglycan biosynthesis. Its function is as follows. Cell wall formation. Adds enolpyruvyl to UDP-N-acetylglucosamine. In Listeria monocytogenes serotype 4b (strain F2365), this protein is UDP-N-acetylglucosamine 1-carboxyvinyltransferase 1.